Here is an 868-residue protein sequence, read N- to C-terminus: Spindle and centriole-associated protein 1 (868 aa).

Disordered stretches follow at residues 129–154 (RTGF…DPGT), 172–201 (DDGG…HSNR), 229–250 (IAAQ…AEDQ), and 291–326 (KPLL…LASS). 2 stretches are compositionally biased toward polar residues: residues 190–200 (ELPNSLSPHSN) and 229–245 (IAAQ…SSEL). Residue Thr-236 is modified to Phosphothreonine. Ser-240 is subject to Phosphoserine. The segment covering 315–326 (SSSTTSADLASS) has biased composition (low complexity). The stretch at 381 to 434 (RYLKESETQLRKEVETRQQLEQMLGDHRELIDALTAEILLLREENGAVQARLQQ) forms a coiled coil. 2 disordered regions span residues 630-664 (PQFV…LGDG) and 702-722 (SSGG…NASE). Residues 634–649 (SLSQPPCSSPPSTQQS) are compositionally biased toward low complexity. A Phosphoserine modification is found at Ser-655. The span at 706–715 (EHGDGLREPS) shows a compositional bias: basic and acidic residues. Residues 736-764 (SSMEERIAELNRQSMEARSKLLQLIEQQK) adopt a coiled-coil conformation. Phosphoserine is present on residues Ser-772, Ser-773, Ser-776, and Ser-831. Residues 805-868 (SSKCNTVSPV…GWFALSAHLP (64 aa)) are disordered. Positions 812–831 (SPVSGVSSRRSSGAISNSCS) are enriched in low complexity.

Interacts with CEP120.

It is found in the cytoplasm. It localises to the cytoskeleton. Its subcellular location is the microtubule organizing center. The protein localises to the centrosome. The protein resides in the centriole. It is found in the spindle. Its function is as follows. Regulator required for centriole duplication, for proper bipolar spindle formation and chromosome congression in mitosis. The sequence is that of Spindle and centriole-associated protein 1 (Spice1) from Rattus norvegicus (Rat).